Here is a 77-residue protein sequence, read N- to C-terminus: Large ribosomal subunit protein uL29 (77 aa).

It belongs to the universal ribosomal protein uL29 family.

This is Large ribosomal subunit protein uL29 from Mycolicibacterium gilvum (strain PYR-GCK) (Mycobacterium gilvum (strain PYR-GCK)).